The primary structure comprises 318 residues: Pyrimidine-specific ribonucleoside hydrolase RihA (318 aa).

Residue histidine 240 is part of the active site.

Belongs to the IUNH family. RihA subfamily.

Hydrolyzes cytidine or uridine to ribose and cytosine or uracil, respectively. The chain is Pyrimidine-specific ribonucleoside hydrolase RihA from Shewanella baltica (strain OS155 / ATCC BAA-1091).